The chain runs to 250 residues: Large ribosomal subunit protein uL30 (250 aa).

This sequence belongs to the universal ribosomal protein uL30 family.

This Yarrowia lipolytica (strain CLIB 122 / E 150) (Yeast) protein is Large ribosomal subunit protein uL30 (RPL7).